The chain runs to 397 residues: Succinate--CoA ligase [ADP-forming] subunit beta (397 aa).

In terms of domain architecture, ATP-grasp spans 9-254 (KALLKGYGAP…ETEEDAKEIE (246 aa)). ATP-binding positions include Lys46, 53–55 (GRG), Glu109, Ala112, and Glu117. Asn209 and Asp223 together coordinate Mg(2+). Substrate-binding positions include Asn274 and 331 to 333 (GIM).

Belongs to the succinate/malate CoA ligase beta subunit family. In terms of assembly, heterotetramer of two alpha and two beta subunits. The cofactor is Mg(2+).

The enzyme catalyses succinate + ATP + CoA = succinyl-CoA + ADP + phosphate. It carries out the reaction GTP + succinate + CoA = succinyl-CoA + GDP + phosphate. The protein operates within carbohydrate metabolism; tricarboxylic acid cycle; succinate from succinyl-CoA (ligase route): step 1/1. Functionally, succinyl-CoA synthetase functions in the citric acid cycle (TCA), coupling the hydrolysis of succinyl-CoA to the synthesis of either ATP or GTP and thus represents the only step of substrate-level phosphorylation in the TCA. The beta subunit provides nucleotide specificity of the enzyme and binds the substrate succinate, while the binding sites for coenzyme A and phosphate are found in the alpha subunit. This is Succinate--CoA ligase [ADP-forming] subunit beta from Agrobacterium fabrum (strain C58 / ATCC 33970) (Agrobacterium tumefaciens (strain C58)).